Reading from the N-terminus, the 2236-residue chain is uncharacterized protein (2236 aa).

Spectrin repeat units lie at residues glutamine 46–glutamate 146 and glutamine 238–glutamate 335. Coiled-coil stretches lie at residues valine 496–serine 541 and aspartate 603–glutamine 631. Spectrin repeat units lie at residues tyrosine 839–lysine 949, lysine 1048–glutamate 1146, leucine 1261–asparagine 1361, isoleucine 1367–alanine 1459, and glutamine 1562–glutamate 1667. Residues glutamine 1835–aspartate 1869 adopt a coiled-coil conformation. 2 EF-hand domains span residues lysine 2104–asparagine 2139 and serine 2141–threonine 2176. Ca(2+) contacts are provided by aspartate 2154, serine 2156, threonine 2158, histidine 2160, and aspartate 2165.

It belongs to the spectrin family.

This is an uncharacterized protein from Caenorhabditis elegans.